Reading from the N-terminus, the 454-residue chain is Chromosomal replication initiator protein DnaA (454 aa).

The interval 1 to 81 (MNNSLWQQCA…PNVVLKVGEA (81 aa)) is domain I, interacts with DnaA modulators. The segment at 79-110 (GEASPTQRDSGSPQRAAATRRKTPNFSSGNTD) is disordered. A domain II region spans residues 81–117 (ASPTQRDSGSPQRAAATRRKTPNFSSGNTDVEVPFES). Residues 82–91 (SPTQRDSGSP) are compositionally biased toward polar residues. A domain III, AAA+ region region spans residues 118 to 334 (NIHPEYTFDN…GALNRVVANV (217 aa)). The ATP site is built by Gly162, Gly164, Lys165, and Thr166. The interval 335-454 (QLTGRPITID…YRNLIRTLSS (120 aa)) is domain IV, binds dsDNA.

Belongs to the DnaA family. Oligomerizes as a right-handed, spiral filament on DNA at oriC.

It localises to the cytoplasm. Plays an essential role in the initiation and regulation of chromosomal replication. ATP-DnaA binds to the origin of replication (oriC) to initiate formation of the DNA replication initiation complex once per cell cycle. Binds the DnaA box (a 9 base pair repeat at the origin) and separates the double-stranded (ds)DNA. Forms a right-handed helical filament on oriC DNA; dsDNA binds to the exterior of the filament while single-stranded (ss)DNA is stabiized in the filament's interior. The ATP-DnaA-oriC complex binds and stabilizes one strand of the AT-rich DNA unwinding element (DUE), permitting loading of DNA polymerase. After initiation quickly degrades to an ADP-DnaA complex that is not apt for DNA replication. Binds acidic phospholipids. This Idiomarina loihiensis (strain ATCC BAA-735 / DSM 15497 / L2-TR) protein is Chromosomal replication initiator protein DnaA.